Consider the following 292-residue polypeptide: ATP synthase gamma chain (292 aa).

This sequence belongs to the ATPase gamma chain family. As to quaternary structure, F-type ATPases have 2 components, CF(1) - the catalytic core - and CF(0) - the membrane proton channel. CF(1) has five subunits: alpha(3), beta(3), gamma(1), delta(1), epsilon(1). CF(0) has three main subunits: a, b and c.

It localises to the cell inner membrane. Produces ATP from ADP in the presence of a proton gradient across the membrane. The gamma chain is believed to be important in regulating ATPase activity and the flow of protons through the CF(0) complex. This chain is ATP synthase gamma chain, found in Magnetococcus marinus (strain ATCC BAA-1437 / JCM 17883 / MC-1).